The chain runs to 416 residues: D-amino acid dehydrogenase (416 aa).

An FAD-binding site is contributed by 3 to 17; it reads VVILGAGVIGVTSAW.

This sequence belongs to the DadA oxidoreductase family. It depends on FAD as a cofactor.

The catalysed reaction is a D-alpha-amino acid + A + H2O = a 2-oxocarboxylate + AH2 + NH4(+). The protein operates within amino-acid degradation; D-alanine degradation; NH(3) and pyruvate from D-alanine: step 1/1. In terms of biological role, oxidative deamination of D-amino acids. The sequence is that of D-amino acid dehydrogenase from Rhizorhabdus wittichii (strain DSM 6014 / CCUG 31198 / JCM 15750 / NBRC 105917 / EY 4224 / RW1) (Sphingomonas wittichii).